Reading from the N-terminus, the 81-residue chain is Protein Vpu (81 aa).

Over 1-7 (MQSLQIL) the chain is Extracellular. A helical transmembrane segment spans residues 8-28 (AIVSLVVVAIIAIVVWTIVLI). Over 29–81 (EYRKILRQRKIDRLFDRIREKAEDSGNESERDQEELSALVEMGHLAPWDVDDL) the chain is Cytoplasmic. Residues serine 53 and serine 57 each carry the phosphoserine; by host CK2 modification.

This sequence belongs to the HIV-1 VPU protein family. As to quaternary structure, homopentamer. Interacts with host CD4 and BRTC; these interactions induce proteasomal degradation of CD4. Interacts with host BST2; this interaction leads to the degradation of host BST2. Interacts with host FBXW11. Interacts with host AP1M1; this interaction plays a role in the mistrafficking and subsequent degradation of host BST2. Interacts with host RANBP2; this interaction allows Vpu to down-regulate host BLM sumoylation. In terms of processing, phosphorylated by host CK2. This phosphorylation is necessary for interaction with human BTRC and degradation of CD4.

It localises to the host membrane. Ion channel activity is inhibited by hexamethylene amiloride in vitro. In terms of biological role, enhances virion budding by targeting host CD4 and Tetherin/BST2 to proteasome degradation. Degradation of CD4 prevents any unwanted premature interactions between viral Env and its host receptor CD4 in the endoplasmic reticulum. Degradation of antiretroviral protein Tetherin/BST2 is important for virion budding, as BST2 tethers new viral particles to the host cell membrane. Mechanistically, Vpu bridges either CD4 or BST2 to BTRC, a substrate recognition subunit of the Skp1/Cullin/F-box protein E3 ubiquitin ligase, induces their ubiquitination and subsequent proteasomal degradation. The alteration of the E3 ligase specificity by Vpu seems to promote the degradation of host IKBKB, leading to NF-kappa-B down-regulation and subsequent apoptosis. Acts as a viroporin that forms an oligomeric ion channel in membranes. Modulates the host DNA repair mechanisms to promote degradation of nuclear viral cDNA in cells that are already productively infected in order to suppress immune sensing and proviral hyper-integration (superinfection). Manipulates PML-NBs and modulates SUMOylation of host BLM protein thereby enhancing its DNA-end processing activity toward viral unintegrated linear DNA. Also inhibits RAD52-mediated homologous repair of viral cDNA, preventing the generation of dead-end circular forms of single copies of the long terminal repeat and permitting sustained nucleolytic attack. The chain is Protein Vpu from Homo sapiens (Human).